Here is a 457-residue protein sequence, read N- to C-terminus: Senescence-associated protein OSA15, chloroplastic (457 aa).

A chloroplast-targeting transit peptide spans 1–57 (MATRIPGTVAASGVYYNDQYRMPCKLKGIHCMALNCIPQKAKVRKCMNGYQSTFRFC).

Belongs to the ATA15/OSA15 family. As to expression, expressed in leaves (at protein level).

The protein localises to the plastid. The protein resides in the chloroplast. May be involved in the regulation of leaf senescence. The chain is Senescence-associated protein OSA15, chloroplastic from Oryza sativa subsp. japonica (Rice).